The following is a 1320-amino-acid chain: CAP-Gly domain-containing linker protein 1 (1320 aa).

The segment at 1 to 53 (MSMLKPSGLKAPTKILKPGSTALKTPAAAAAPLEKTVPSEKASGPPSSETQEE) is disordered. Low complexity predominate over residues 21–35 (TALKTPAAAAAPLEK). Ser-48 is modified (phosphoserine). A Phosphothreonine modification is found at Thr-50. The region spanning 78-120 (GETQFAPGQWAGIVLDEPIGKNDGSVAGVRYFQCEPLKGIFTR) is the CAP-Gly 1 domain. The important for tubulin binding stretch occupies residues 97-101 (GKNDG). Phosphoserine is present on Ser-146. Residues 156–171 (VSSSPATPSNIPQKPS) show a composition bias toward polar residues. The interval 156-181 (VSSSPATPSNIPQKPSQPVAKETSAT) is disordered. Thr-181 is subject to Phosphothreonine. Phosphoserine occurs at positions 194, 196, 199, and 203. In terms of domain architecture, CAP-Gly 2 spans 231 to 273 (GETDFAKGEWCGVELDEPLGKNDGAVAGTRYFQCQPKYGLFAP). Positions 301–331 (TTPASLKRSPSASSLSSMSSVASSVSSKPSR) are enriched in low complexity. The interval 301-338 (TTPASLKRSPSASSLSSMSSVASSVSSKPSRTGLLTET) is disordered. Residue Ser-309 is modified to Phosphoserine. Ser-311 carries the phosphoserine; by PKA modification. Phosphoserine is present on residues Ser-314 and Ser-347. The disordered stretch occupies residues 1089-1109 (SLPSNTLRESEYRKDADEEKA). The segment covering 1096-1109 (RESEYRKDADEEKA) has biased composition (basic and acidic residues). Ser-1116 carries the phosphoserine modification. The segment at 1178-1201 (KRQLSSSSGNTDVQTEEDERAQES) is disordered. Residues 1180 to 1190 (QLSSSSGNTDV) show a composition bias toward polar residues. At Ser-1246 the chain carries Phosphoserine. A CCHC-type zinc finger spans residues 1299–1316 (PYCEICEMFGHWATNCND).

In terms of assembly, interacts with MTOR; phosphorylates and regulates CLIP1. Interacts (via CAP-Gly domains) with tubulin and TUBA1B. Interacts with SLAIN2. Interacts with MAPRE1 and MAPRE3. Interacts (via zinc finger) with DCTN1. Binds preferentially to tyrosinated microtubules, and only marginally to detyrosinated microtubules. In terms of processing, phosphorylated. Phosphorylation induces conformational changes by increasing the affinity of the N-terminus for C-terminus, resulting in inhibition of its function thus decreasing its binding to microtubules and DCTN1. Exhibits a folded, autoinhibited conformation when phosphorylated and an open conformation when dephosphorylated with increased binding affinity to microtubules and DCTN1. Phosphorylation regulates its recruitment to tyrosinated microtubules and the recruitment of vesicular cargo to microtubules in neurons. Phosphorylation by MTOR may positively regulate CLIP1 association with microtubules.

The protein localises to the cytoplasm. The protein resides in the cytoskeleton. It is found in the cytoplasmic vesicle membrane. It localises to the cell projection. Its subcellular location is the ruffle. In terms of biological role, binds to the plus end of microtubules and regulates the dynamics of the microtubule cytoskeleton. Promotes microtubule growth and microtubule bundling. Links cytoplasmic vesicles to microtubules and thereby plays an important role in intracellular vesicle trafficking. Plays a role macropinocytosis and endosome trafficking. The sequence is that of CAP-Gly domain-containing linker protein 1 (Clip1) from Rattus norvegicus (Rat).